A 49-amino-acid polypeptide reads, in one-letter code: Large ribosomal subunit protein bL33A (49 aa).

Belongs to the bacterial ribosomal protein bL33 family.

This Streptococcus pneumoniae (strain Hungary19A-6) protein is Large ribosomal subunit protein bL33A.